The sequence spans 358 residues: Transcription factor bHLH67 (358 aa).

Positions N125 to Q176 are disordered. Residues T127–S137 are compositionally biased toward low complexity. The segment covering E157–P166 has biased composition (basic residues). Positions N175 to L226 constitute a bHLH domain.

As to quaternary structure, homodimer. In terms of tissue distribution, expressed constitutively in roots, leaves, stems, and flowers.

It localises to the nucleus. This is Transcription factor bHLH67 (BHLH67) from Arabidopsis thaliana (Mouse-ear cress).